A 526-amino-acid polypeptide reads, in one-letter code: Probable di/tripeptide-binding protein 5 (526 aa).

The N-terminal stretch at 1–21 (MRLAAFSLFLAPLLLAQPAAA) is a signal peptide.

The protein belongs to the bacterial solute-binding protein 5 family. The complex is composed of two ATP-binding proteins (DppD and DppF), two transmembrane proteins (DppB and DppC) and a solute-binding protein (DppA5). Five orthologous SBPs (DppA1-A5) are present in P.aeruginosa, which increases the substrate specificity of the DppBCDF transporter.

Functionally, part of the ABC transporter DppABCDF involved in the uptake of various di/tripeptides. This chain is Probable di/tripeptide-binding protein 5, found in Pseudomonas aeruginosa (strain UCBPP-PA14).